The sequence spans 322 residues: Quinolinate synthase (322 aa).

His-38 and Ser-55 together coordinate iminosuccinate. Cys-100 contributes to the [4Fe-4S] cluster binding site. Iminosuccinate contacts are provided by residues 126 to 128 (YIN) and Ser-143. Cys-186 lines the [4Fe-4S] cluster pocket. Residues 212–214 (HPE) and Thr-229 contribute to the iminosuccinate site. Cys-279 contributes to the [4Fe-4S] cluster binding site.

The protein belongs to the quinolinate synthase family. Type 2 subfamily. The cofactor is [4Fe-4S] cluster.

The protein localises to the cytoplasm. It carries out the reaction iminosuccinate + dihydroxyacetone phosphate = quinolinate + phosphate + 2 H2O + H(+). The protein operates within cofactor biosynthesis; NAD(+) biosynthesis; quinolinate from iminoaspartate: step 1/1. Functionally, catalyzes the condensation of iminoaspartate with dihydroxyacetone phosphate to form quinolinate. The polypeptide is Quinolinate synthase (Cyanothece sp. (strain PCC 7425 / ATCC 29141)).